Here is a 232-residue protein sequence, read N- to C-terminus: Large ribosomal subunit protein uL1 (232 aa).

It belongs to the universal ribosomal protein uL1 family. As to quaternary structure, part of the 50S ribosomal subunit.

In terms of biological role, binds directly to 23S rRNA. The L1 stalk is quite mobile in the ribosome, and is involved in E site tRNA release. Its function is as follows. Protein L1 is also a translational repressor protein, it controls the translation of the L11 operon by binding to its mRNA. The chain is Large ribosomal subunit protein uL1 from Bacillus velezensis (strain DSM 23117 / BGSC 10A6 / LMG 26770 / FZB42) (Bacillus amyloliquefaciens subsp. plantarum).